The chain runs to 320 residues: Phosphatidylserine decarboxylase proenzyme (320 aa).

Active-site charge relay system; for autoendoproteolytic cleavage activity residues include Asp90, His147, and Ser254. Ser254 (schiff-base intermediate with substrate; via pyruvic acid; for decarboxylase activity) is an active-site residue. Ser254 carries the pyruvic acid (Ser); by autocatalysis modification. The segment at 288-320 (EASTAAEPAPLPEEEIRAEHRASPLVDDTQDQG) is disordered.

The protein belongs to the phosphatidylserine decarboxylase family. PSD-B subfamily. Prokaryotic type I sub-subfamily. As to quaternary structure, heterodimer of a large membrane-associated beta subunit and a small pyruvoyl-containing alpha subunit. Requires pyruvate as cofactor. Post-translationally, is synthesized initially as an inactive proenzyme. Formation of the active enzyme involves a self-maturation process in which the active site pyruvoyl group is generated from an internal serine residue via an autocatalytic post-translational modification. Two non-identical subunits are generated from the proenzyme in this reaction, and the pyruvate is formed at the N-terminus of the alpha chain, which is derived from the carboxyl end of the proenzyme. The autoendoproteolytic cleavage occurs by a canonical serine protease mechanism, in which the side chain hydroxyl group of the serine supplies its oxygen atom to form the C-terminus of the beta chain, while the remainder of the serine residue undergoes an oxidative deamination to produce ammonia and the pyruvoyl prosthetic group on the alpha chain. During this reaction, the Ser that is part of the protease active site of the proenzyme becomes the pyruvoyl prosthetic group, which constitutes an essential element of the active site of the mature decarboxylase.

It is found in the cell membrane. It catalyses the reaction a 1,2-diacyl-sn-glycero-3-phospho-L-serine + H(+) = a 1,2-diacyl-sn-glycero-3-phosphoethanolamine + CO2. It participates in phospholipid metabolism; phosphatidylethanolamine biosynthesis; phosphatidylethanolamine from CDP-diacylglycerol: step 2/2. Functionally, catalyzes the formation of phosphatidylethanolamine (PtdEtn) from phosphatidylserine (PtdSer). In Klebsiella pneumoniae (strain 342), this protein is Phosphatidylserine decarboxylase proenzyme.